A 44-amino-acid polypeptide reads, in one-letter code: Photosystem I reaction center subunit IX (44 aa).

A helical membrane pass occupies residues Tyr-7 to Ile-27.

This sequence belongs to the PsaJ family.

The protein resides in the plastid. Its subcellular location is the chloroplast thylakoid membrane. Its function is as follows. May help in the organization of the PsaE and PsaF subunits. The protein is Photosystem I reaction center subunit IX of Pinus thunbergii (Japanese black pine).